Consider the following 827-residue polypeptide: Putative potassium transporter 12 (827 aa).

Residues 1-31 are disordered; it reads MEEIEEGSSNNSIRRVGTGSSDRRWVDGSEV. The Cytoplasmic portion of the chain corresponds to 1 to 82; the sequence is MEEIEEGSSN…AGSHGHNLKD (82 aa). A helical transmembrane segment spans residues 83–103; that stretch reads LSLLTTLGIAFQTLGVVYGDM. Over 104-129 the chain is Extracellular; sequence GTSPLYVFSDVFSKVPIRSEVDVLGA. A helical transmembrane segment spans residues 130–150; it reads LSLVIYTIAVIPLAKYVFVVL. The Cytoplasmic segment spans residues 151–216; that stretch reads KANDNGEGGT…ALETKGYLKT (66 aa). The chain crosses the membrane as a helical span at residues 217–237; the sequence is LLLLLVLMGTSMIIGDGILTP. Residues 238-253 lie on the Extracellular side of the membrane; it reads AMSVMSAMSGLQGEVK. A helical membrane pass occupies residues 254–274; that stretch reads GFGTNALVMSSIVILVALFSI. Over 275 to 281 the chain is Cytoplasmic; that stretch reads QRFGTGK. Residues 282-302 form a helical membrane-spanning segment; that stretch reads VGFLFAPVLALWFFSLGAIGI. The Extracellular segment spans residues 303 to 335; that stretch reads YNLLKYDFTVIRALNPFYIVLFFNKNSKQAWSA. The helical transmembrane segment at 336 to 356 threads the bilayer; sequence LGGCVLCITGAEAMFADLGHF. Residues 357–363 are Cytoplasmic-facing; sequence SVRSIQM. Residues 364–384 form a helical membrane-spanning segment; that stretch reads AFTCVVFPCLLLAYMGQAAYL. The Extracellular segment spans residues 385 to 402; it reads TKHPEASARIFYDSVPKS. A helical transmembrane segment spans residues 403–423; that stretch reads LFWPVFVIATLAAMIASQAMI. Topologically, residues 424-454 are cytoplasmic; the sequence is SATFSCVKQAMALGCFPRLKIIHTSKKRIGQ. A helical membrane pass occupies residues 455-475; it reads IYIPVINWFLMIMCILVVSIF. Topologically, residues 476-480 are extracellular; sequence RSTTH. The next 2 helical transmembrane spans lie at 481 to 501 and 502 to 522; these read IANA…VLVT and LVML…PLIF. Residues 523–536 are Extracellular-facing; that stretch reads GSVETIYLLAVLTK. Residues 537–557 traverse the membrane as a helical segment; that stretch reads ILEGGWVPLVFATFFLTVMYI. Residues 558-827 are Cytoplasmic-facing; the sequence is WNYGSVLKYQ…ILQAGMTYMV (270 aa). Residues 728–750 form a disordered region; that stretch reads RSEPEQELDSEVLPSSSVGSSME. Over residues 738–748 the composition is skewed to low complexity; it reads EVLPSSSVGSS.

The protein belongs to the HAK/KUP transporter (TC 2.A.72.3) family.

The protein resides in the cell membrane. Functionally, putative potassium transporter. This is Putative potassium transporter 12 (POT12) from Arabidopsis thaliana (Mouse-ear cress).